The following is a 174-amino-acid chain: Gamma-crystallin A (174 aa).

2 consecutive Beta/gamma crystallin 'Greek key' domains span residues glycine 2–serine 40 and glycine 41–proline 83. Residues histidine 84–serine 87 form a connecting peptide region. Beta/gamma crystallin 'Greek key' domains lie at histidine 88–glutamate 128 and glycine 129–threonine 171.

It belongs to the beta/gamma-crystallin family. Monomer.

Functionally, crystallins are the dominant structural components of the vertebrate eye lens. The protein is Gamma-crystallin A (CRYGA) of Homo sapiens (Human).